Here is a 1577-residue protein sequence, read N- to C-terminus: Probable serine/threonine-protein kinase gdt9 (1577 aa).

Positions 1 to 16 (MKTFLLIFLLICVCKG) are cleaved as a signal peptide. At 17 to 966 (ITNITTPSIY…NNEDNHKKLV (950 aa)) the chain is on the extracellular side. A helical transmembrane segment spans residues 967 to 987 (IALSVSIPVAALLVILCFGIF). At 988–1577 (ICYNNNKKNK…SLVKIFKRFN (590 aa)) the chain is on the cytoplasmic side. Basic and acidic residues predominate over residues 998 to 1014 (NETKGKDIETNTDKKDD). Disordered regions lie at residues 998 to 1019 (NETKGKDIETNTDKKDDENENE) and 1050 to 1128 (TLPP…FPTI). Residues 1050–1082 (TLPPQSTISIDTSPSSENTTFTESLTPKKSATV) are compositionally biased toward polar residues. Low complexity predominate over residues 1091–1115 (NSTNESTVSNSSSENNSDNNNNNNN). A Protein kinase domain is found at 1290–1573 (LDFDEICGQG…EIVFSLVKIF (284 aa)). ATP-binding positions include 1296-1304 (CGQGTYGMV) and K1317. D1436 (proton acceptor) is an active-site residue.

It in the N-terminal section; belongs to the GDT family. In the C-terminal section; belongs to the protein kinase superfamily. TKL Ser/Thr protein kinase family.

The protein localises to the membrane. The enzyme catalyses L-seryl-[protein] + ATP = O-phospho-L-seryl-[protein] + ADP + H(+). The catalysed reaction is L-threonyl-[protein] + ATP = O-phospho-L-threonyl-[protein] + ADP + H(+). The chain is Probable serine/threonine-protein kinase gdt9 (gdt9) from Dictyostelium discoideum (Social amoeba).